The sequence spans 130 residues: Small ribosomal subunit protein uS8A (130 aa).

Belongs to the universal ribosomal protein uS8 family. As to quaternary structure, component of the small ribosomal subunit (SSU). Mature yeast ribosomes consist of a small (40S) and a large (60S) subunit. The 40S small subunit contains 1 molecule of ribosomal RNA (18S rRNA) and 33 different proteins (encoded by 57 genes). The large 60S subunit contains 3 rRNA molecules (25S, 5.8S and 5S rRNA) and 46 different proteins (encoded by 81 genes).

It is found in the cytoplasm. Functionally, component of the ribosome, a large ribonucleoprotein complex responsible for the synthesis of proteins in the cell. The small ribosomal subunit (SSU) binds messenger RNAs (mRNAs) and translates the encoded message by selecting cognate aminoacyl-transfer RNA (tRNA) molecules. The large subunit (LSU) contains the ribosomal catalytic site termed the peptidyl transferase center (PTC), which catalyzes the formation of peptide bonds, thereby polymerizing the amino acids delivered by tRNAs into a polypeptide chain. The nascent polypeptides leave the ribosome through a tunnel in the LSU and interact with protein factors that function in enzymatic processing, targeting, and the membrane insertion of nascent chains at the exit of the ribosomal tunnel. The protein is Small ribosomal subunit protein uS8A of Saccharomyces cerevisiae (strain ATCC 204508 / S288c) (Baker's yeast).